The following is a 172-amino-acid chain: L-methionine sulfoximine/L-methionine sulfone acetyltransferase (172 aa).

The N-acetyltransferase domain occupies Ala3–Asp166. Residues Arg75 to Phe77 and Glu85 to Ser87 each bind substrate. Acetyl-CoA contacts are provided by residues Val88 to Val90, Gly96 to Val101, and Asn127.

In terms of assembly, homodimer.

It carries out the reaction L-methionine sulfoximine + acetyl-CoA = N-acetyl-L-methionine sulfoximine + CoA + H(+). The catalysed reaction is L-methionine sulfone + acetyl-CoA = N-acetyl-L-methionine sulfone + CoA + H(+). Its function is as follows. Plays a role in the resistance against the toxic effects of L-methionine sulfoximine (MSX), a rare amino acid, which inhibits glutamine synthetase (GlnA). Catalyzes the acetylation of L-methionine sulfoximine (MSX). The protein is L-methionine sulfoximine/L-methionine sulfone acetyltransferase of Pseudomonas aeruginosa (strain ATCC 15692 / DSM 22644 / CIP 104116 / JCM 14847 / LMG 12228 / 1C / PRS 101 / PAO1).